A 394-amino-acid polypeptide reads, in one-letter code: Elongation factor Tu (394 aa).

Residues Lys10–Glu204 form the tr-type G domain. The segment at Gly19–Thr26 is G1. Gly19–Thr26 serves as a coordination point for GTP. A Mg(2+)-binding site is contributed by Thr26. The segment at Gly60–Asn64 is G2. A G3 region spans residues Asp81 to Gly84. GTP-binding positions include Asp81–His85 and Asn136–Asp139. The interval Asn136–Asp139 is G4. A G5 region spans residues Ser174–Leu176.

The protein belongs to the TRAFAC class translation factor GTPase superfamily. Classic translation factor GTPase family. EF-Tu/EF-1A subfamily. In terms of assembly, monomer.

The protein localises to the cytoplasm. The enzyme catalyses GTP + H2O = GDP + phosphate + H(+). Its function is as follows. GTP hydrolase that promotes the GTP-dependent binding of aminoacyl-tRNA to the A-site of ribosomes during protein biosynthesis. This chain is Elongation factor Tu, found in Shewanella amazonensis (strain ATCC BAA-1098 / SB2B).